The following is a 307-amino-acid chain: Probable RuBisCO transcriptional regulator (307 aa).

The region spanning 5–62 is the HTH lysR-type domain; sequence FTLQQLRIFKAIASEKSFTQAAEILFVSQPSLSKQIKTLENRLGILLLNRTGNKILLT. A DNA-binding region (H-T-H motif) is located at residues 22–41; sequence FTQAAEILFVSQPSLSKQIK.

The protein belongs to the LysR transcriptional regulatory family.

Its subcellular location is the plastid. It localises to the chloroplast. Functionally, trans-acting transcriptional regulator of RuBisCO genes (rbcL and rbcS) expression. The chain is Probable RuBisCO transcriptional regulator (rbcR-A) from Thalassiosira pseudonana (Marine diatom).